We begin with the raw amino-acid sequence, 618 residues long: Grainyhead-like protein 1 homolog (618 aa).

The segment at 1–91 is transcription activation; that stretch reads MTQEYDNKRP…EGEHPEPEHS (91 aa). Residues 76-92 are compositionally biased toward basic and acidic residues; that stretch reads SSAVKPEGEHPEPEHSK. The interval 76–100 is disordered; it reads SSAVKPEGEHPEPEHSKRNSIPNVT. Thr208 is modified (phosphothreonine). The Grh/CP2 DB domain occupies 248-474; sequence SGNNFEYTLE…DLDTQPVLFI (227 aa). Interaction with DNA regions lie at residues 380–389 and 427–430; these read TDFSSQKGVK and RKIR.

The protein belongs to the grh/CP2 family. Grainyhead subfamily. In terms of assembly, binds DNA as homodimer. Homodimer, also forms heterodimers with GRHL2 or GRHL3. In terms of processing, methylation at Arg-9 and Lys-116 may be involved in regulating transcriptional activation. Isoform 1 is highly expressed in brain, pancreas, tonsil, placenta and kidney. Isoform 2 is highly expressed in brain and liver. Expression in the skin is confined to the suprabasal layers of the epidermis and to the hair follicles.

Its subcellular location is the nucleus. In terms of biological role, transcription factor involved in epithelial development. Binds directly to the consensus DNA sequence 5'-AACCGGTT-3'. Important regulator of DSG1 in the context of hair anchorage and epidermal differentiation, participates in the maintenance of the skin barrier. There is no genetic interaction with GRHL3, nor functional cooperativity due to diverse target gene selectivity during epithelia development. May play a role in regulating glucose homeostasis and insulin signaling. The protein is Grainyhead-like protein 1 homolog of Mus musculus (Mouse).